The following is an 806-amino-acid chain: MKVSYNWLKDYLDLTTAPEALAEKITRTGIEVADVAQMSAGLKKIVVGHVLSCEPHPDSDHLHVCEVDVGEEEPFQIVCGAPNVAAGQYVIVALPNSRIADNVKIKKGKMRGVVSMGMICGLQEIGFADSVVPKEYVDGIFVFPEAIAPGTDVYEALGMTDYIIDLDLTANRADALGIHGVAHEVAAIESLTPHFEDVAVSESDVQTKNQLSAQVADEQLAPTYHLRMLQNVTVQPSPLWLQTRLWNAGIRPINNLVDVTNYMMLTYGQPLHAFDADTLTGDHKQIEVRLAKTGEKLTTLDEAEHDLTNEDIVITDGNQPIALAGVMGGFNSEITANTKNVIIEAAIFAPTAVRKTAQRHNLRSDASSRFEKGVNVADVQVALDAAAAMMAELGAGQVTAGVVSPTNLAPQPKVIQFDSARVNRVLGTDMSVQTMINLLERLGFEVANNADQLTVTIPARRWDIEIQADVIEEIARLYGYDNLPSTLPTGDMTTGALTTEQKALRRTRHTLEGAGLTQAISYALTTEEKAGQFTLAAKQTATVLDWPMTQDHAYLRMNLVTGLLDDAAYNVARKQTDLALYEQGRVFLQHADQARPNEVEYVAGLMSGNRQVKSWQEAAAPVDFYTIKGIVDTLMASYNLQAAVAYQATDAYPEMHPGRTAAIYVGETFVGIVGQIHPKIAKATHLKETYIFELDLAKILELQRQTIIAKPAPKFPEVTRDIALQVPEAITNADLVNAIKEKGGRYLVSVSLFDVYAGSHIEAGEKSMAYTLTYLNEDATLTEEEVNAAFEKVVAHLVATFQAKVR.

The tRNA-binding domain maps to 39–154; sequence SAGLKKIVVG…EAIAPGTDVY (116 aa). Residues 410 to 485 enclose the B5 domain; the sequence is PQPKVIQFDS…RLYGYDNLPS (76 aa). Mg(2+)-binding residues include aspartate 463, aspartate 469, glutamate 472, and glutamate 473. The FDX-ACB domain maps to 713-806; that stretch reads PKFPEVTRDI…LVATFQAKVR (94 aa).

Belongs to the phenylalanyl-tRNA synthetase beta subunit family. Type 1 subfamily. Tetramer of two alpha and two beta subunits. Mg(2+) serves as cofactor.

The protein localises to the cytoplasm. The enzyme catalyses tRNA(Phe) + L-phenylalanine + ATP = L-phenylalanyl-tRNA(Phe) + AMP + diphosphate + H(+). This is Phenylalanine--tRNA ligase beta subunit from Latilactobacillus sakei subsp. sakei (strain 23K) (Lactobacillus sakei subsp. sakei).